Here is a 346-residue protein sequence, read N- to C-terminus: 2,5-dichlorohydroquinone reductive dechlorinase (346 aa).

In terms of domain architecture, GST N-terminal spans 43–154; the sequence is PRFELFHFVF…YLCDALSGGT (112 aa). The GST C-terminal domain occupies 189–335; the sequence is DRRPESMQAV…AIIQWPGHPP (147 aa).

It belongs to the GST superfamily.

The catalysed reaction is 2,5-dichlorohydroquinone + 2 glutathione = chlorohydroquinone + glutathione disulfide + chloride + H(+). The enzyme catalyses chlorohydroquinone + 2 glutathione = hydroquinone + glutathione disulfide + chloride + H(+). The protein operates within xenobiotic degradation; gamma-hexachlorocyclohexane degradation. Catalyzes the degradation of 2,5-dichlorohydroquinone (2,5-DCHQ) into hydroquinone (HQ) via chlorohydroquinone (CHQ). This chain is 2,5-dichlorohydroquinone reductive dechlorinase, found in Sphingobium indicum (strain DSM 16412 / CCM 7286 / MTCC 6364 / B90A).